The chain runs to 211 residues: Prolactin-1 (211 aa).

A signal peptide spans 1 to 23 (MARRSQGTKLHLAVLCLVVSCHA). Cystine bridges form between Cys69–Cys184 and Cys201–Cys211.

This sequence belongs to the somatotropin/prolactin family.

Its subcellular location is the secreted. The polypeptide is Prolactin-1 (prl1) (Oncorhynchus keta (Chum salmon)).